The following is a 371-amino-acid chain: Putative glutamate--cysteine ligase 2 (371 aa).

This sequence belongs to the glutamate--cysteine ligase type 2 family. YbdK subfamily.

The catalysed reaction is L-cysteine + L-glutamate + ATP = gamma-L-glutamyl-L-cysteine + ADP + phosphate + H(+). In terms of biological role, ATP-dependent carboxylate-amine ligase which exhibits weak glutamate--cysteine ligase activity. The sequence is that of Putative glutamate--cysteine ligase 2 from Burkholderia multivorans (strain ATCC 17616 / 249).